A 207-amino-acid chain; its full sequence is RNA chaperone ProQ (207 aa).

The tract at residues 100-156 (TLAESKAKVQARRKEQAQKARDEEKSKPKTKKAPQQRRANKPQAQKPAKQPVETRAL) is disordered. Positions 111-126 (RRKEQAQKARDEEKSK) are enriched in basic and acidic residues. Residues 127-139 (PKTKKAPQQRRAN) are compositionally biased toward basic residues.

It belongs to the ProQ family.

It is found in the cytoplasm. In terms of biological role, RNA chaperone with significant RNA binding, RNA strand exchange and RNA duplexing activities. This chain is RNA chaperone ProQ, found in Vibrio vulnificus (strain CMCP6).